Consider the following 432-residue polypeptide: Cytochrome c biogenesis protein CcsB (432 aa).

A run of 3 helical transmembrane segments spans residues 18–38 (LRLA…GTGI), 76–96 (SGWF…CSWR), and 166–186 (VGPL…AWGA).

It belongs to the Ccs1/CcsB family. As to quaternary structure, may interact with CcsA.

It localises to the cellular thylakoid membrane. Its function is as follows. Required during biogenesis of c-type cytochromes (cytochrome c6 and cytochrome f) at the step of heme attachment. In Synechococcus sp. (strain CC9605), this protein is Cytochrome c biogenesis protein CcsB.